Consider the following 249-residue polypeptide: Undecaprenyl-diphosphatase (249 aa).

The next 8 helical transmembrane spans lie at 11 to 31 (GLTEFLPVSSSGHLAIFTAIF), 35 to 55 (PDVGYFAFLHLATFLAVVIFV), 74 to 94 (ITLSLKLFVSMIPAAIVGIFF), 101 to 121 (IFSETFFIGVFLAITGVFMLL), 135 to 155 (IPYLDAFIIGIFQAFSVLPGI), 175 to 195 (AVKYSFLMSLPVIFGAGVLEM), 208 to 228 (FIVAFLTGILGLHLLKKMVIA), and 229 to 249 (GKLKFFGYYCFLASLFVIFYI).

This sequence belongs to the UppP family.

The protein localises to the cell membrane. The catalysed reaction is di-trans,octa-cis-undecaprenyl diphosphate + H2O = di-trans,octa-cis-undecaprenyl phosphate + phosphate + H(+). In terms of biological role, catalyzes the dephosphorylation of undecaprenyl diphosphate (UPP). In Methanococcus vannielii (strain ATCC 35089 / DSM 1224 / JCM 13029 / OCM 148 / SB), this protein is Undecaprenyl-diphosphatase.